Here is a 1072-residue protein sequence, read N- to C-terminus: LRR receptor-like serine/threonine-protein kinase RGI5 (1072 aa).

The N-terminal stretch at 1–21 (MERERSNFFFLFLFCSWVSMA) is a signal peptide. Residues 22-706 (QPTLSLSSDG…NGVKSPKIVA (685 aa)) lie on the Extracellular side of the membrane. Residues cysteine 56 and cysteine 63 are joined by a disulfide bond. 25 LRR repeats span residues 66–89 (DNRVISVSIPDTFLNLSSIPDLSS), 90–113 (LSSLQFLNLSSTNLSGPIPPSFGK), 114–138 (LTHLRLLDLSSNSLSGPIPSELGRL), 140–162 (TLQFLILNANKLSGSIPSQISNL), 164–185 (ALQVLCLQDNLLNGSIPSSFGS), 187–211 (VSLQQFRLGGNTNLGGPIPAQLGFL), 212–234 (KNLTTLGFAASGLSGSIPSTFGN), 235–259 (LVNLQTLALYDTEISGTIPPQLGLC), 260–283 (SELRNLYLHMNKLTGSIPKELGKL), 285–307 (KITSLLLWGNSLSGVIPPEISNC), 308–331 (SSLVVFDVSANDLTGDIPGDLGKL), 332–355 (VWLEQLQLSDNMFTGQIPWELSNC), 356–379 (SSLIALQLDKNKLSGSIPSQIGNL), 381–402 (SLQSFFLWENSISGTIPSSFGN), 403–427 (CTDLVALDLSRNKLTGRIPEELFSL), 429–451 (RLSKLLLLGNSLSGGLPKSVAKC), 452–475 (QSLVRLRVGENQLSGQIPKEIGEL), 477–499 (NLVFLDLYMNHFSGGLPYEISNI), 500–523 (TVLELLDVHNNYITGDIPAQLGNL), 524–546 (VNLEQLDLSRNSFTGNIPLSFGN), 548–571 (SYLNKLILNNNLLTGQIPKSIKNL), 572–595 (QKLTLLDLSYNSLSGEIPQELGQV), 597–619 (SLTINLDLSYNTFTGNIPETFSD), 620–642 (LTQLQSLDLSSNSLHGDIKVLGS), and 643–667 (LTSLASLNISCNNFSGPIPSTPFFK). 3 N-linked (GlcNAc...) asparagine glycosylation sites follow: asparagine 80, asparagine 97, and asparagine 102. The Small peptide recognition motif lies at 171-172 (QD). N-linked (GlcNAc...) asparagine glycosylation is present at asparagine 176. Residues 193-196 (RLGG) carry the Small peptide recognition motif. N-linked (GlcNAc...) asparagine glycosylation occurs at asparagine 213. 3 short sequence motifs (small peptide recognition) span residues 216-221 (TLGFAA), tyrosine 244, and 266-268 (YLH). The N-linked (GlcNAc...) asparagine glycan is linked to asparagine 306. 2 consecutive short sequence motifs (small peptide recognition) follow at residues 314–317 (DVSA) and 336–338 (QLQ). Asparagine 354 is a glycosylation site (N-linked (GlcNAc...) asparagine). Positions 384–388 (SFFLW) match the Small peptide recognition motif. Residue asparagine 402 is glycosylated (N-linked (GlcNAc...) asparagine). 3 short sequence motifs (small peptide recognition) span residues 410 to 413 (DLSR), 432 to 436 (KLLLL), and 456 to 458 (RLR). Asparagine 498 is a glycosylation site (N-linked (GlcNAc...) asparagine). N-linked (GlcNAc...) asparagine glycosylation is present at asparagine 546. Residues asparagine 650 and asparagine 655 are each glycosylated (N-linked (GlcNAc...) asparagine). The helical transmembrane segment at 707-727 (LTAVILASITIAILAAWLLIL) threads the bilayer. Residues 728–1072 (RNNHLYKTSQ…SQPLIKPSSS (345 aa)) lie on the Cytoplasmic side of the membrane. Position 764 is a phosphothreonine (threonine 764). One can recognise a Protein kinase domain in the interval 772-1067 (LTDENVIGKG…EWGKTSQPLI (296 aa)). Residues 778–786 (IGKGCSGIV) and lysine 800 contribute to the ATP site. Phosphotyrosine occurs at positions 851 and 887. The active-site Proton acceptor is the aspartate 900. The residue at position 936 (serine 936) is a Phosphoserine. 2 positions are modified to phosphotyrosine: tyrosine 944 and tyrosine 951. Position 952 is a phosphothreonine (threonine 952).

This sequence belongs to the protein kinase superfamily. Ser/Thr protein kinase family. In terms of assembly, binds to RGF1; this interaction triggers the formation of heterodimers with SERK1. Post-translationally, phosphorylated and ubiquitinated upon interaction with RGF1, thus leading to activation a subsequent degradation. Autophosphorylated. As to expression, expressed in roots and hypocotyls.

It is found in the membrane. It catalyses the reaction L-seryl-[protein] + ATP = O-phospho-L-seryl-[protein] + ADP + H(+). It carries out the reaction L-threonyl-[protein] + ATP = O-phospho-L-threonyl-[protein] + ADP + H(+). In terms of biological role, together with RGI1, RGI2, RGI3 and RGI4, acts as a receptor of RGF1, a peptide hormone that maintains the postembryonic root stem cell niche by regulating the expression levels and patterns of the transcription factor PLETHORA (PLT). Links RGF1 signal with its downstream components. The polypeptide is LRR receptor-like serine/threonine-protein kinase RGI5 (Arabidopsis thaliana (Mouse-ear cress)).